The following is a 301-amino-acid chain: Small ribosomal subunit protein uS2 (301 aa).

Belongs to the universal ribosomal protein uS2 family.

This chain is Small ribosomal subunit protein uS2, found in Acidobacterium capsulatum (strain ATCC 51196 / DSM 11244 / BCRC 80197 / JCM 7670 / NBRC 15755 / NCIMB 13165 / 161).